The chain runs to 59 residues: Large ribosomal subunit protein bL32 (59 aa).

The tract at residues 1 to 21 (MAVPKKKSSKSKGRSRAAHHA) is disordered.

It belongs to the bacterial ribosomal protein bL32 family.

The sequence is that of Large ribosomal subunit protein bL32 from Magnetococcus marinus (strain ATCC BAA-1437 / JCM 17883 / MC-1).